The primary structure comprises 76 residues: Small, acid-soluble spore protein Tlp (76 aa).

3 stretches are compositionally biased toward basic and acidic residues: residues 1 to 15 (MAKR…ERIE), 26 to 38 (DEAR…HSEE), and 46 to 76 (EIEQ…KNNS). Positions 1-76 (MAKRDDRSNN…DEVNDQKNNS (76 aa)) are disordered.

This sequence belongs to the Tlp family.

Its subcellular location is the spore core. The protein is Small, acid-soluble spore protein Tlp of Shouchella clausii (strain KSM-K16) (Alkalihalobacillus clausii).